The following is a 528-amino-acid chain: Peptide chain release factor 3 (528 aa).

One can recognise a tr-type G domain in the interval 10 to 280 (AKRRTFGIIS…IDMAPAPGPR (271 aa)). Residues 19–26 (SHPDAGKT), 87–91 (DTPGH), and 141–144 (NKLD) each bind GTP.

Belongs to the TRAFAC class translation factor GTPase superfamily. Classic translation factor GTPase family. PrfC subfamily.

The protein localises to the cytoplasm. Increases the formation of ribosomal termination complexes and stimulates activities of RF-1 and RF-2. It binds guanine nucleotides and has strong preference for UGA stop codons. It may interact directly with the ribosome. The stimulation of RF-1 and RF-2 is significantly reduced by GTP and GDP, but not by GMP. This chain is Peptide chain release factor 3, found in Desulfotalea psychrophila (strain LSv54 / DSM 12343).